The primary structure comprises 228 residues: Large ribosomal subunit protein bL25 (228 aa).

The disordered stretch occupies residues 196–228 (EEAAVAEAQSAESAEGKAEAEAEATNEKNKSEA). Residues 209 to 228 (AEGKAEAEAEATNEKNKSEA) are compositionally biased toward basic and acidic residues.

The protein belongs to the bacterial ribosomal protein bL25 family. CTC subfamily. As to quaternary structure, part of the 50S ribosomal subunit; part of the 5S rRNA/L5/L18/L25 subcomplex. Contacts the 5S rRNA. Binds to the 5S rRNA independently of L5 and L18.

This is one of the proteins that binds to the 5S RNA in the ribosome where it forms part of the central protuberance. The chain is Large ribosomal subunit protein bL25 from Methylorubrum extorquens (strain CM4 / NCIMB 13688) (Methylobacterium extorquens).